Reading from the N-terminus, the 218-residue chain is Small ribosomal subunit protein uS3c (218 aa).

Residues 47-118 (VRKHIKSSSN…KLRMALTEVE (72 aa)) form the KH type-2 domain.

Belongs to the universal ribosomal protein uS3 family. As to quaternary structure, part of the 30S ribosomal subunit.

Its subcellular location is the plastid. The protein localises to the chloroplast. This chain is Small ribosomal subunit protein uS3c (rps3), found in Anthoceros angustus (Hornwort).